A 576-amino-acid chain; its full sequence is Protein NRT1/ PTR FAMILY 2.12 (576 aa).

11 helical membrane-spanning segments follow: residues 58–78 (FNVY…GALI), 89–109 (IAYA…TACL), 130–150 (KLQL…SGGI), 176–196 (FFNW…TVVV), 203–223 (WVIG…LFFV), 329–349 (VWSA…FMVF), 364–384 (IPAA…VPIY), 406–426 (MGIG…VEGV), 441–461 (WLAL…IGLI), 475–495 (IANS…SLLV), and 522–542 (YFYY…WYCA).

Belongs to the major facilitator superfamily. Proton-dependent oligopeptide transporter (POT/PTR) (TC 2.A.17) family. In terms of tissue distribution, expressed in flowers and siliques. Expressed in vascular bundle of the siliques and in funiculus.

The protein localises to the cell membrane. Its function is as follows. Low-affinity proton-dependent nitrate transporter. Not involved in dipeptides transport. Involved in delivering nitrate for seed development. The protein is Protein NRT1/ PTR FAMILY 2.12 (NPF2.12) of Arabidopsis thaliana (Mouse-ear cress).